A 467-amino-acid polypeptide reads, in one-letter code: Asparagine--tRNA ligase (467 aa).

Belongs to the class-II aminoacyl-tRNA synthetase family. Homodimer.

The protein resides in the cytoplasm. It carries out the reaction tRNA(Asn) + L-asparagine + ATP = L-asparaginyl-tRNA(Asn) + AMP + diphosphate + H(+). The protein is Asparagine--tRNA ligase of Histophilus somni (strain 2336) (Haemophilus somnus).